Here is a 55-residue protein sequence, read N- to C-terminus: Sec-independent protein translocase protein TatA (55 aa).

The helical transmembrane segment at 1–21 threads the bilayer; the sequence is MSLGPWQLFLVLIIILVLFGA.

This sequence belongs to the TatA/E family. The Tat system comprises two distinct complexes: a TatABC complex, containing multiple copies of TatA, TatB and TatC subunits, and a separate TatA complex, containing only TatA subunits. Substrates initially bind to the TatABC complex, which probably triggers association of the separate TatA complex to form the active translocon.

It is found in the cell membrane. Functionally, part of the twin-arginine translocation (Tat) system that transports large folded proteins containing a characteristic twin-arginine motif in their signal peptide across membranes. TatA could form the protein-conducting channel of the Tat system. The sequence is that of Sec-independent protein translocase protein TatA from Wolbachia pipientis wMel.